A 224-amino-acid polypeptide reads, in one-letter code: Orotidine 5'-phosphate decarboxylase (224 aa).

Substrate contacts are provided by residues aspartate 10, lysine 32, 59 to 68, threonine 115, arginine 175, glutamine 184, glycine 204, and arginine 205; that span reads DLKLHDIPNT. Lysine 61 functions as the Proton donor in the catalytic mechanism.

Belongs to the OMP decarboxylase family. Type 1 subfamily. Homodimer.

It carries out the reaction orotidine 5'-phosphate + H(+) = UMP + CO2. It participates in pyrimidine metabolism; UMP biosynthesis via de novo pathway; UMP from orotate: step 2/2. Catalyzes the decarboxylation of orotidine 5'-monophosphate (OMP) to uridine 5'-monophosphate (UMP). This is Orotidine 5'-phosphate decarboxylase from Novosphingobium aromaticivorans (strain ATCC 700278 / DSM 12444 / CCUG 56034 / CIP 105152 / NBRC 16084 / F199).